The following is a 927-amino-acid chain: Isoleucine--tRNA ligase (927 aa).

Positions 57 to 67 (PYANGHIHIGH) match the 'HIGH' region motif. An L-isoleucyl-5'-AMP-binding site is contributed by E561. Positions 602–606 (KMSKS) match the 'KMSKS' region motif. ATP is bound at residue K605. Residues C897, C900, C917, and C920 each contribute to the Zn(2+) site.

The protein belongs to the class-I aminoacyl-tRNA synthetase family. IleS type 1 subfamily. In terms of assembly, monomer. The cofactor is Zn(2+).

The protein resides in the cytoplasm. It carries out the reaction tRNA(Ile) + L-isoleucine + ATP = L-isoleucyl-tRNA(Ile) + AMP + diphosphate. In terms of biological role, catalyzes the attachment of isoleucine to tRNA(Ile). As IleRS can inadvertently accommodate and process structurally similar amino acids such as valine, to avoid such errors it has two additional distinct tRNA(Ile)-dependent editing activities. One activity is designated as 'pretransfer' editing and involves the hydrolysis of activated Val-AMP. The other activity is designated 'posttransfer' editing and involves deacylation of mischarged Val-tRNA(Ile). The sequence is that of Isoleucine--tRNA ligase from Syntrophotalea carbinolica (strain DSM 2380 / NBRC 103641 / GraBd1) (Pelobacter carbinolicus).